Here is a 757-residue protein sequence, read N- to C-terminus: Xaa-Pro dipeptidyl-peptidase (757 aa).

Residues serine 348, aspartate 468, and histidine 498 each act as charge relay system in the active site.

Belongs to the peptidase S15 family. In terms of assembly, homodimer.

Its subcellular location is the cytoplasm. It carries out the reaction Hydrolyzes Xaa-Pro-|- bonds to release unblocked, N-terminal dipeptides from substrates including Ala-Pro-|-p-nitroanilide and (sequentially) Tyr-Pro-|-Phe-Pro-|-Gly-Pro-|-Ile.. In terms of biological role, removes N-terminal dipeptides sequentially from polypeptides having unsubstituted N-termini provided that the penultimate residue is proline. This Streptococcus pneumoniae serotype 19F (strain G54) protein is Xaa-Pro dipeptidyl-peptidase.